The sequence spans 651 residues: Acetyl-coenzyme A synthetase (651 aa).

Residues 193–196, T313, and N337 each bind CoA; that span reads RAGR. ATP is bound by residues 389-391, 413-418, D502, and R517; these read GEP and DTWWQT. S525 contributes to the CoA binding site. R528 serves as a coordination point for ATP. 3 residues coordinate Mg(2+): V539, H541, and V544. R586 lines the CoA pocket. K611 is modified (N6-acetyllysine).

The protein belongs to the ATP-dependent AMP-binding enzyme family. The cofactor is Mg(2+). Post-translationally, acetylated. Deacetylation by the SIR2-homolog deacetylase activates the enzyme.

It carries out the reaction acetate + ATP + CoA = acetyl-CoA + AMP + diphosphate. Functionally, catalyzes the conversion of acetate into acetyl-CoA (AcCoA), an essential intermediate at the junction of anabolic and catabolic pathways. AcsA undergoes a two-step reaction. In the first half reaction, AcsA combines acetate with ATP to form acetyl-adenylate (AcAMP) intermediate. In the second half reaction, it can then transfer the acetyl group from AcAMP to the sulfhydryl group of CoA, forming the product AcCoA. The sequence is that of Acetyl-coenzyme A synthetase from Shewanella denitrificans (strain OS217 / ATCC BAA-1090 / DSM 15013).